The following is a 517-amino-acid chain: Mucin-like protein 3 (517 aa).

Positions 1-29 (MAQPVHSLCSAFGLQCCLLFLLASWGAGA) are cleaved as a signal peptide. At 30 to 448 (TTFQEYQKTG…GENDSFPAWA (419 aa)) the chain is on the extracellular side. The tract at residues 67 to 341 (SGQRPPELPK…PTENLGNTTL (275 aa)) is disordered. Over residues 83–93 (QKRHCNTTRHS) the composition is skewed to basic residues. The N-linked (GlcNAc...) asparagine glycan is linked to N88. The span at 105–116 (TIDHKSSTDNHE) shows a compositional bias: basic and acidic residues. An N-linked (GlcNAc...) asparagine glycan is attached at N124. Polar residues predominate over residues 169-179 (RKSTTGKSTVT). The span at 180–190 (RKSDKTGRPLE) shows a compositional bias: basic and acidic residues. Over residues 194–213 (STLDKTSTSSHKTTTSFHNS) the composition is skewed to low complexity. Polar residues-rich tracts occupy residues 214–225 (GNSQTKQKSTSF), 232–243 (ASKTTYKTTGTP), and 263–283 (TKTT…QSLA). Residues 305–317 (TENRERTANENKK) show a composition bias toward basic and acidic residues. N338 carries an N-linked (GlcNAc...) asparagine glycan. The chain crosses the membrane as a helical span at residues 449–469 (IVIVVLVAVILLLVFLGLIFL). Topologically, residues 470-517 (VSYMMRTRRTLTQNTQYNDAEDEGGPNSYPVYLMEQQNLGMGQIPSPR) are cytoplasmic.

Detected in lung, esophagus, stomach, rectum, skin, cervix, testis, kidney, uterus and small intestine. Expressed in pancreas (at protein level).

The protein resides in the cell membrane. It localises to the cytoplasm. May modulate NF-kappaB signaling and play a role in cell growth. This Homo sapiens (Human) protein is Mucin-like protein 3.